The chain runs to 333 residues: Ornithine carbamoyltransferase (333 aa).

Carbamoyl phosphate is bound by residues 56 to 59, arginine 107, and 134 to 137; these read STRT and HPTQ. L-ornithine contacts are provided by residues asparagine 167, aspartate 231, and 235–236; that span reads SM. Residues 273-274 and arginine 318 each bind carbamoyl phosphate; that span reads CL.

This sequence belongs to the aspartate/ornithine carbamoyltransferase superfamily. OTCase family.

Its subcellular location is the cytoplasm. The catalysed reaction is carbamoyl phosphate + L-ornithine = L-citrulline + phosphate + H(+). Its pathway is amino-acid degradation; L-arginine degradation via ADI pathway; carbamoyl phosphate from L-arginine: step 2/2. Reversibly catalyzes the transfer of the carbamoyl group from carbamoyl phosphate (CP) to the N(epsilon) atom of ornithine (ORN) to produce L-citrulline. In Clostridium botulinum (strain ATCC 19397 / Type A), this protein is Ornithine carbamoyltransferase.